Here is a 304-residue protein sequence, read N- to C-terminus: L-lactate dehydrogenase (304 aa).

NAD(+) is bound by residues Val11, Asp32, Arg37, and Gly76–Ala77. Residues Gln79, Arg85, and Asn117–Asp120 each bind substrate. NAD(+) is bound at residue Ser138. Asp143–Arg146 is a binding site for substrate. Beta-D-fructose 1,6-bisphosphate-binding residues include Arg148 and His163. The active-site Proton acceptor is His170. A substrate-binding site is contributed by Thr225.

Belongs to the LDH/MDH superfamily. LDH family. Homotetramer.

It localises to the cytoplasm. It catalyses the reaction (S)-lactate + NAD(+) = pyruvate + NADH + H(+). It functions in the pathway fermentation; pyruvate fermentation to lactate; (S)-lactate from pyruvate: step 1/1. With respect to regulation, allosterically activated by fructose 1,6-bisphosphate (FBP). Its function is as follows. Catalyzes the conversion of lactate to pyruvate. This Deinococcus radiodurans (strain ATCC 13939 / DSM 20539 / JCM 16871 / CCUG 27074 / LMG 4051 / NBRC 15346 / NCIMB 9279 / VKM B-1422 / R1) protein is L-lactate dehydrogenase.